The sequence spans 428 residues: Serine--tRNA ligase (428 aa).

Residue 231 to 233 (TAE) participates in L-serine binding. 262–264 (RSE) contributes to the ATP binding site. Glutamate 285 is an L-serine binding site. 349–352 (EISS) is an ATP binding site. Serine 385 is a binding site for L-serine.

Belongs to the class-II aminoacyl-tRNA synthetase family. Type-1 seryl-tRNA synthetase subfamily. As to quaternary structure, homodimer. The tRNA molecule binds across the dimer.

The protein localises to the cytoplasm. It carries out the reaction tRNA(Ser) + L-serine + ATP = L-seryl-tRNA(Ser) + AMP + diphosphate + H(+). The catalysed reaction is tRNA(Sec) + L-serine + ATP = L-seryl-tRNA(Sec) + AMP + diphosphate + H(+). Its pathway is aminoacyl-tRNA biosynthesis; selenocysteinyl-tRNA(Sec) biosynthesis; L-seryl-tRNA(Sec) from L-serine and tRNA(Sec): step 1/1. Functionally, catalyzes the attachment of serine to tRNA(Ser). Is also able to aminoacylate tRNA(Sec) with serine, to form the misacylated tRNA L-seryl-tRNA(Sec), which will be further converted into selenocysteinyl-tRNA(Sec). This chain is Serine--tRNA ligase, found in Staphylococcus aureus (strain bovine RF122 / ET3-1).